The chain runs to 689 residues: Glycine--tRNA ligase beta subunit (689 aa).

The protein belongs to the class-II aminoacyl-tRNA synthetase family. As to quaternary structure, tetramer of two alpha and two beta subunits.

The protein resides in the cytoplasm. The enzyme catalyses tRNA(Gly) + glycine + ATP = glycyl-tRNA(Gly) + AMP + diphosphate. The chain is Glycine--tRNA ligase beta subunit from Salmonella heidelberg (strain SL476).